The following is a 207-amino-acid chain: Peptidyl-tRNA hydrolase (207 aa).

Y19 contacts tRNA. Catalysis depends on H24, which acts as the Proton acceptor. TRNA contacts are provided by F70, N72, and N118.

This sequence belongs to the PTH family. In terms of assembly, monomer.

It localises to the cytoplasm. The enzyme catalyses an N-acyl-L-alpha-aminoacyl-tRNA + H2O = an N-acyl-L-amino acid + a tRNA + H(+). In terms of biological role, hydrolyzes ribosome-free peptidyl-tRNAs (with 1 or more amino acids incorporated), which drop off the ribosome during protein synthesis, or as a result of ribosome stalling. Its function is as follows. Catalyzes the release of premature peptidyl moieties from peptidyl-tRNA molecules trapped in stalled 50S ribosomal subunits, and thus maintains levels of free tRNAs and 50S ribosomes. In Synechococcus sp. (strain CC9311), this protein is Peptidyl-tRNA hydrolase.